The chain runs to 241 residues: Purine nucleoside phosphorylase DeoD-type 1 (241 aa).

His5 lines the a purine D-ribonucleoside pocket. Phosphate is bound by residues Gly21, Arg25, Arg44, and Arg88 to Ser91. A purine D-ribonucleoside-binding positions include Glu180–Glu182 and Ser204–Asp205. The Proton donor role is filled by Asp205.

The protein belongs to the PNP/UDP phosphorylase family. Homohexamer; trimer of homodimers.

The catalysed reaction is a purine D-ribonucleoside + phosphate = a purine nucleobase + alpha-D-ribose 1-phosphate. It carries out the reaction a purine 2'-deoxy-D-ribonucleoside + phosphate = a purine nucleobase + 2-deoxy-alpha-D-ribose 1-phosphate. In terms of biological role, catalyzes the reversible phosphorolytic breakdown of the N-glycosidic bond in the beta-(deoxy)ribonucleoside molecules, with the formation of the corresponding free purine bases and pentose-1-phosphate. The polypeptide is Purine nucleoside phosphorylase DeoD-type 1 (Vibrio cholerae serotype O1 (strain ATCC 39315 / El Tor Inaba N16961)).